The sequence spans 476 residues: Adenylosuccinate synthetase, chloroplastic (476 aa).

Low complexity predominate over residues 1–20; that stretch reads AAAAAGRGRSFSPAAPAPSS. A disordered region spans residues 1–34; the sequence is AAAAAGRGRSFSPAAPAPSSVRLPGRQAPAPAAA. GTP is bound by residues 63-69 and 91-93; these read GDEGKGK and GHT. Catalysis depends on aspartate 64, which acts as the Proton acceptor. The Mg(2+) site is built by aspartate 64 and glycine 91. IMP is bound by residues 64–67, 89–92, threonine 181, arginine 195, glutamine 275, threonine 290, and arginine 354; these read DEGK and NAGH. Histidine 92 acts as the Proton donor in catalysis. Position 350 to 356 (350 to 356) interacts with substrate; that stretch reads TTTGRPR. Residues arginine 356, 382–384, and 465–467 contribute to the GTP site; these read KLD and GVG.

Belongs to the adenylosuccinate synthetase family. As to quaternary structure, homodimer. Requires Mg(2+) as cofactor.

The protein resides in the plastid. The protein localises to the chloroplast. The catalysed reaction is IMP + L-aspartate + GTP = N(6)-(1,2-dicarboxyethyl)-AMP + GDP + phosphate + 2 H(+). It functions in the pathway purine metabolism; AMP biosynthesis via de novo pathway; AMP from IMP: step 1/2. In terms of biological role, plays an important role in the de novo pathway and in the salvage pathway of purine nucleotide biosynthesis. Catalyzes the first committed step in the biosynthesis of AMP from IMP. The polypeptide is Adenylosuccinate synthetase, chloroplastic (Triticum aestivum (Wheat)).